The sequence spans 27 residues: U18-ctenitoxin-Co1a (27 aa).

The protein belongs to the u18-CNTX family. As to expression, expressed by the venom gland.

The protein localises to the secreted. Functionally, not toxic to mice by intracerebroventricular injection. This Ctenus ornatus (Brazilian spider) protein is U18-ctenitoxin-Co1a.